Consider the following 466-residue polypeptide: tRNA-2-methylthio-N(6)-dimethylallyladenosine synthase (466 aa).

Residues 21–137 form the MTTase N-terminal domain; the sequence is GSYWITTFGC…LEDLLNQVDN (117 aa). Residues C30, C66, C100, C172, C176, and C179 each contribute to the [4Fe-4S] cluster site. Positions 158 to 395 constitute a Radical SAM core domain; that stretch reads RDSNICAWVN…NLLVEQTAKD (238 aa). The region spanning 398-466 is the TRAM domain; sequence TRYHNQIVEV…AFSLTGSPIQ (69 aa).

This sequence belongs to the methylthiotransferase family. MiaB subfamily. As to quaternary structure, monomer. It depends on [4Fe-4S] cluster as a cofactor.

The protein resides in the cytoplasm. The enzyme catalyses N(6)-dimethylallyladenosine(37) in tRNA + (sulfur carrier)-SH + AH2 + 2 S-adenosyl-L-methionine = 2-methylsulfanyl-N(6)-dimethylallyladenosine(37) in tRNA + (sulfur carrier)-H + 5'-deoxyadenosine + L-methionine + A + S-adenosyl-L-homocysteine + 2 H(+). In terms of biological role, catalyzes the methylthiolation of N6-(dimethylallyl)adenosine (i(6)A), leading to the formation of 2-methylthio-N6-(dimethylallyl)adenosine (ms(2)i(6)A) at position 37 in tRNAs that read codons beginning with uridine. In Prochlorococcus marinus (strain SARG / CCMP1375 / SS120), this protein is tRNA-2-methylthio-N(6)-dimethylallyladenosine synthase.